We begin with the raw amino-acid sequence, 212 residues long: MKLSKYIDHTLLKPQATEKDILKLIEEAKTYDFASVCVNPSWVKLAYENLKDTDVKVCTVVGFPLGATSTASKVYETKVAIEDGADEIDMVISVGQLKSGNDEYVKEEIKKIVEASKNRLVKVIIETCLLTEEEKVKACTFSKEAGADYVKTSTGFSTGGAKPEDIKLMRETVGKNMGVKASGGIHTREEMEVMIENGATRIGASCGVELVK.

The active-site Proton donor/acceptor is the aspartate 89. Catalysis depends on lysine 151, which acts as the Schiff-base intermediate with acetaldehyde. Lysine 180 functions as the Proton donor/acceptor in the catalytic mechanism.

It belongs to the DeoC/FbaB aldolase family. DeoC type 1 subfamily.

It is found in the cytoplasm. The catalysed reaction is 2-deoxy-D-ribose 5-phosphate = D-glyceraldehyde 3-phosphate + acetaldehyde. It functions in the pathway carbohydrate degradation; 2-deoxy-D-ribose 1-phosphate degradation; D-glyceraldehyde 3-phosphate and acetaldehyde from 2-deoxy-alpha-D-ribose 1-phosphate: step 2/2. Catalyzes a reversible aldol reaction between acetaldehyde and D-glyceraldehyde 3-phosphate to generate 2-deoxy-D-ribose 5-phosphate. The polypeptide is Deoxyribose-phosphate aldolase (Clostridium botulinum (strain Okra / Type B1)).